A 253-amino-acid chain; its full sequence is Uroplakin-3b-like protein 1 (253 aa).

A signal peptide spans 1 to 26 (MGLGRGQSPLLMALLLLLACLQMGMS). Residues 27-194 (LERISYVPQL…PGPQTAGTVV (168 aa)) are Extracellular-facing. Residues Asn-78 and Asn-130 are each glycosylated (N-linked (GlcNAc...) asparagine). A helical membrane pass occupies residues 195–215 (IIAILSVLLAVLLAALLALLI). The Cytoplasmic portion of the chain corresponds to 216 to 253 (FTWYDTCGSTPISGPGELVFVRKYDTHHMSRPSTVGGS).

This sequence belongs to the uroplakin-3 family.

The protein localises to the membrane. This Bos taurus (Bovine) protein is Uroplakin-3b-like protein 1.